Consider the following 449-residue polypeptide: UNC93-like protein MFSD11 (449 aa).

The chain crosses the membrane as a helical span at residues 8 to 28; it reads LFNIIILGVAFMFMFTAFQTC. Asn-40 is a glycosylation site (N-linked (GlcNAc...) asparagine). Helical transmembrane passes span 53-73, 74-94, 96-116, 138-158, and 170-190; these read AIIYGVFSASNLITPSVVAIV, GPQLSMFASGLFYSMYIAVFI, PFPWSFYTASVFIGIAAAVLW, IFWALLQSSLFFGNLYIYFAW, and RTVFIALTVISLVGTVLFFLI. Ser-204 is subject to Phosphoserine. The next 6 helical transmembrane spans lie at 239–259, 277–297, 309–329, 359–379, 385–405, and 410–430; these read MLLLSITTAYTGLELTFFSGV, LIGLSGIFIGIGEILGGSLFG, PVVLLGILVHFIAFYLIFLNM, FLLGLGDSCFNTQLLSILGFL, APAFAIFKFVQSICAAVAFFY, and LLHWQLLVMVIFGFFGTISFF.

It belongs to the unc-93 family.

The protein localises to the membrane. This Homo sapiens (Human) protein is UNC93-like protein MFSD11 (MFSD11).